A 100-amino-acid chain; its full sequence is Transcription and mRNA export factor SUS1 (100 aa).

Belongs to the ENY2 family. In terms of assembly, component of the nuclear pore complex (NPC)-associated TREX-2 complex (transcription and export complex 2), composed of at least SUS1, SAC3, THP1, SEM1, and CDC31. TREX-2 contains 2 SUS1 chains. The TREX-2 complex interacts with the nucleoporin NUP1. Component of the 1.8 MDa SAGA transcription coactivator-HAT complex. SAGA is built of 5 distinct domains with specialized functions. Within the SAGA complex, SUS1, SGF11, SGF73 and UBP8 form an additional subcomplex of SAGA called the DUB module (deubiquitination module). Interacts directly with THP1, SAC3, SGF11, and with the RNA polymerase II.

It is found in the nucleus. It localises to the nucleoplasm. Its subcellular location is the cytoplasm. The protein resides in the P-body. Involved in mRNA export coupled transcription activation by association with both the TREX-2 and the SAGA complexes. At the promoters, SAGA is required for recruitment of the basal transcription machinery. It influences RNA polymerase II transcriptional activity through different activities such as TBP interaction and promoter selectivity, interaction with transcription activators, and chromatin modification through histone acetylation and deubiquitination. Within the SAGA complex, participates in a subcomplex required for deubiquitination of H2B and for the maintenance of steady-state H3 methylation levels. The TREX-2 complex functions in docking export-competent ribonucleoprotein particles (mRNPs) to the nuclear entrance of the nuclear pore complex (nuclear basket). TREX-2 participates in mRNA export and accurate chromatin positioning in the nucleus by tethering genes to the nuclear periphery. May also be involved in cytoplasmic mRNA decay by interaction with components of P-bodies. The sequence is that of Transcription and mRNA export factor SUS1 from Cryptococcus neoformans var. neoformans serotype D (strain B-3501A) (Filobasidiella neoformans).